The sequence spans 438 residues: MESQQLHQNPHSLHGSAYASVTSKEVSSNQDPLAVSASNLPEFDRDSTKVNSQQETTPGTSAVPENHHHVSPQPASVPPPQNGQYQQHGMMTPNKAMASNWAHYQQPSMMTCSHYQTSPAYYQPDPHYPLPQYIPPLSTSSPDPIDSQDQHSEVPQAKTKVRNNVLPPHTLTSEENFYTWVKFYIRFLKNSNLGDIIPNDQGEIKRQMTYEEHAYIYNTFQAFAPFHLLPTWVKQILEINYADILTVLCKSVSKMQTNNQELKDWIALANLEYDGSTSADTFEITVSTIIQRLKENNINVSDRLACQLILKGLSGDFKYLRNQYRTKTNMKLSQLFAEIQLIYDENKIMNLNKPSQYKQHSEYKNVSRTSPNTTNTKVTTRNYHRTNSSKPRAAKAHNIATSSKFSRVNNDHINESTVSSQYLSDDNELSLRPATERI.

Composition is skewed to polar residues over residues 1 to 11, 19 to 39, and 49 to 60; these read MESQQLHQNPH, ASVT…SASN, and KVNSQQETTPGT. 3 disordered regions span residues 1-88, 364-397, and 419-438; these read MESQ…YQQH, KNVS…AKAH, and SSQY…TERI. Residues 295–397 form an RNA-binding region; that stretch reads ENNINVSDRL…SSKPRAAKAH (103 aa). The span at 369–381 shows a compositional bias: low complexity; it reads TSPNTTNTKVTTR.

Homotrimer.

It is found in the cytoplasm. Its function is as follows. Capsid protein (CA) is the structural component of the virus-like particle (VLP), forming the shell that encapsulates the retrotransposons dimeric RNA genome. The particles are assembled from trimer-clustered units and there are holes in the capsid shells that allow for the diffusion of macromolecules. CA also has nucleocapsid-like chaperone activity, promoting primer tRNA(i)-Met annealing to the multipartite primer-binding site (PBS), dimerization of Ty2 RNA and initiation of reverse transcription. In Saccharomyces cerevisiae (strain ATCC 204508 / S288c) (Baker's yeast), this protein is Transposon Ty2-B Gag polyprotein (TY2A-B).